A 234-amino-acid chain; its full sequence is Large ribosomal subunit protein uL1 (234 aa).

It belongs to the universal ribosomal protein uL1 family. As to quaternary structure, part of the 50S ribosomal subunit.

Functionally, binds directly to 23S rRNA. The L1 stalk is quite mobile in the ribosome, and is involved in E site tRNA release. Its function is as follows. Protein L1 is also a translational repressor protein, it controls the translation of the L11 operon by binding to its mRNA. The protein is Large ribosomal subunit protein uL1 of Sulfurovum sp. (strain NBC37-1).